Consider the following 235-residue polypeptide: Putative quercetin 2,3-dioxygenase ZMO1337 (235 aa).

His57, His59, His101, and Glu103 together coordinate a divalent metal cation.

Belongs to the pirin family. Requires a divalent metal cation as cofactor.

The catalysed reaction is quercetin + O2 = 2-(3,4-dihydroxybenzoyloxy)-4,6-dihydroxybenzoate + CO. The protein operates within flavonoid metabolism; quercetin degradation. Putative quercetin 2,3-dioxygenase. The sequence is that of Putative quercetin 2,3-dioxygenase ZMO1337 from Zymomonas mobilis subsp. mobilis (strain ATCC 31821 / ZM4 / CP4).